We begin with the raw amino-acid sequence, 242 residues long: Hairy and enhancer of split-related protein HELT (242 aa).

Residues 10 to 65 form the bHLH domain; that stretch reads RTPVSHKVIEKRRRDRINRCLNELGKTVPMALAKQSSGKLEKAEILEMTVQYLRAL. Lys-48 is modified (N6-acetyllysine). One can recognise an Orange domain in the interval 87-122; the sequence is FHYGYHECMKNLVHYLTTVERMETKDTKYARILAFL.

The protein belongs to the HEY family. Self-associates. Interacts with HES5 and HEY2.

It is found in the nucleus. Functionally, transcriptional repressor which binds preferentially to the canonical E box sequence 5'-CACGCG-3'. The chain is Hairy and enhancer of split-related protein HELT (HELT) from Homo sapiens (Human).